Consider the following 335-residue polypeptide: Glycerol-3-phosphate dehydrogenase [NAD(P)+] (335 aa).

NADPH contacts are provided by Ser-12, Trp-13, and Lys-107. The sn-glycerol 3-phosphate site is built by Lys-107, Gly-138, and Ser-140. Ala-142 provides a ligand contact to NADPH. Sn-glycerol 3-phosphate-binding residues include Lys-193, Asp-246, Ser-256, Arg-257, and Asn-258. Lys-193 serves as the catalytic Proton acceptor. Residue Arg-257 coordinates NADPH. Residues Val-281 and Glu-283 each coordinate NADPH.

The protein belongs to the NAD-dependent glycerol-3-phosphate dehydrogenase family.

Its subcellular location is the cytoplasm. The catalysed reaction is sn-glycerol 3-phosphate + NAD(+) = dihydroxyacetone phosphate + NADH + H(+). The enzyme catalyses sn-glycerol 3-phosphate + NADP(+) = dihydroxyacetone phosphate + NADPH + H(+). It functions in the pathway membrane lipid metabolism; glycerophospholipid metabolism. Catalyzes the reduction of the glycolytic intermediate dihydroxyacetone phosphate (DHAP) to sn-glycerol 3-phosphate (G3P), the key precursor for phospholipid synthesis. The chain is Glycerol-3-phosphate dehydrogenase [NAD(P)+] from Geobacter sp. (strain M21).